The chain runs to 332 residues: 5-dehydro-2-deoxygluconokinase 1 (332 aa).

This sequence belongs to the carbohydrate kinase PfkB family.

The enzyme catalyses 5-dehydro-2-deoxy-D-gluconate + ATP = 6-phospho-5-dehydro-2-deoxy-D-gluconate + ADP + H(+). It functions in the pathway polyol metabolism; myo-inositol degradation into acetyl-CoA; acetyl-CoA from myo-inositol: step 5/7. Its function is as follows. Catalyzes the phosphorylation of 5-dehydro-2-deoxy-D-gluconate (2-deoxy-5-keto-D-gluconate or DKG) to 6-phospho-5-dehydro-2-deoxy-D-gluconate (DKGP). The polypeptide is 5-dehydro-2-deoxygluconokinase 1 (Bacillus cereus (strain ZK / E33L)).